Here is a 106-residue protein sequence, read N- to C-terminus: ATP-dependent Clp protease adapter protein ClpS (106 aa).

Belongs to the ClpS family. Binds to the N-terminal domain of the chaperone ClpA.

In terms of biological role, involved in the modulation of the specificity of the ClpAP-mediated ATP-dependent protein degradation. In Salmonella arizonae (strain ATCC BAA-731 / CDC346-86 / RSK2980), this protein is ATP-dependent Clp protease adapter protein ClpS.